Here is a 396-residue protein sequence, read N- to C-terminus: MGEEAAGVRPELVREAEVSLLECKVCFERFGHRQQRRPRNLPCGHVVCLACVAALAHPRTLALECPFCRRACRACDTSDCLPVLHLLELLGSTLHASPAALSAASCAPGALTCYHAFGGWGTLVNPTGLALCPKTGRVVVVHDGKRRVKIFDSGGGGAHQFGEKGDAAHDVKYPLDVAVTNDCHVVVTDAGDCSLKVFDFFGQIKLVVGKQFSLPWGVEITPHNGVLVTDAEAGTLHLLEADFPEGVLRRIERLQAHLCNPRGVAVSWLTGAIAVLEHPCALGTSSGNNTRVKVFNSSMQLIGQVDSFGLNLLFPSKITASAVTFDHQGNVIVADTSGPAIVCLGKPEEFPALKPMVTHGLSRPVALVFTKENSLLVLDSASHSIKVFKVMEGNGG.

The segment at 23–69 (CKVCFERFGHRQQRRPRNLPCGHVVCLACVAALAHPRTLALECPFCR) adopts an RING-type zinc-finger fold. 6 NHL repeats span residues 110–154 (ALTC…FDSG), 158–201 (AHQF…FDFF), 202–242 (GQIK…LEAD), 245–298 (EGVL…FNSS), 299–347 (MQLI…LGKP), and 348–391 (EEFP…FKVM).

In terms of assembly, interacts with AGL. Interacts (via the NHL repeats) with EPM2A/laforin. Forms a complex with EPM2A/laforin and HSP70.

It is found in the endoplasmic reticulum. The protein localises to the nucleus. It catalyses the reaction S-ubiquitinyl-[E2 ubiquitin-conjugating enzyme]-L-cysteine + [acceptor protein]-L-lysine = [E2 ubiquitin-conjugating enzyme]-L-cysteine + N(6)-ubiquitinyl-[acceptor protein]-L-lysine.. The protein operates within protein modification; protein ubiquitination. Functionally, E3 ubiquitin-protein ligase. Together with the phosphatase EPM2A/laforin, appears to be involved in the clearance of toxic polyglucosan and protein aggregates via multiple pathways. In complex with EPM2A/laforin and HSP70, suppresses the cellular toxicity of misfolded proteins by promoting their degradation through the ubiquitin-proteasome system (UPS). Ubiquitinates the glycogen-targeting protein phosphatase subunits PPP1R3C/PTG and PPP1R3D in a laforin-dependent manner and targets them for proteasome-dependent degradation, thus decreasing glycogen accumulation. Polyubiquitinates EPM2A/laforin and ubiquitinates AGL and targets them for proteasome-dependent degradation. Also promotes proteasome-independent protein degradation through the macroautophagy pathway. This is E3 ubiquitin-protein ligase NHLRC1 (Nhlrc1) from Rattus norvegicus (Rat).